The sequence spans 200 residues: MSDALRELGTHLELKRADCILSWDVTFGELNVDVAPSNLVDFVDFLRSDSSCRFSTLVDITAVDYPERAKRFDVVYHFLSMYQNQRIRLRVSIREDDMVPSITDVHPSANWFEREVFDMFGILFTGHPDLRRILTDYGFRGYPLRKDFPTTGYTEVRYDEAEKRVVYEPVSLVQEYRQFDFMSPWEGADYILPGDEKKEG.

It belongs to the complex I 30 kDa subunit family. NDH-1 is composed of 14 different subunits. Subunits NuoB, C, D, E, F, and G constitute the peripheral sector of the complex.

Its subcellular location is the cell inner membrane. The enzyme catalyses a quinone + NADH + 5 H(+)(in) = a quinol + NAD(+) + 4 H(+)(out). Functionally, NDH-1 shuttles electrons from NADH, via FMN and iron-sulfur (Fe-S) centers, to quinones in the respiratory chain. The immediate electron acceptor for the enzyme in this species is believed to be ubiquinone. Couples the redox reaction to proton translocation (for every two electrons transferred, four hydrogen ions are translocated across the cytoplasmic membrane), and thus conserves the redox energy in a proton gradient. The sequence is that of NADH-quinone oxidoreductase subunit C from Ruegeria pomeroyi (strain ATCC 700808 / DSM 15171 / DSS-3) (Silicibacter pomeroyi).